Reading from the N-terminus, the 241-residue chain is Pyridoxal phosphate phosphatase PHOSPHO2 (241 aa).

The active-site Nucleophile is the D8. 2 residues coordinate Mg(2+): D8 and D10. The active-site Proton donor is the D10. Substrate is bound by residues D19 and D99. D179 contributes to the Mg(2+) binding site.

Belongs to the HAD-like hydrolase superfamily. PHOSPHO family. It depends on Mg(2+) as a cofactor.

The catalysed reaction is pyridoxal 5'-phosphate + H2O = pyridoxal + phosphate. Functionally, phosphatase that has high activity toward pyridoxal 5'-phosphate (PLP). Also active at much lower level toward pyrophosphate, phosphoethanolamine (PEA), phosphocholine (PCho), phospho-l-tyrosine, fructose-6-phosphate, p-nitrophenyl phosphate, and h-glycerophosphate. The protein is Pyridoxal phosphate phosphatase PHOSPHO2 (Phospho2) of Mus musculus (Mouse).